A 100-amino-acid chain; its full sequence is Small ribosomal subunit protein uS14c (100 aa).

It belongs to the universal ribosomal protein uS14 family. Part of the 30S ribosomal subunit.

It is found in the plastid. The protein localises to the chloroplast. Its function is as follows. Binds 16S rRNA, required for the assembly of 30S particles. The polypeptide is Small ribosomal subunit protein uS14c (Chara vulgaris (Common stonewort)).